Reading from the N-terminus, the 60-residue chain is U20-myrmicitoxin-Mri1a (60 aa).

Positions 1–24 (MKSVILLFAVIAIIVAVIIPAING) are cleaved as a signal peptide. Residues 25–34 (ESSSNPSANA) constitute a propeptide that is removed on maturation.

It belongs to the formicidae venom precursor-01 superfamily. In terms of tissue distribution, expressed by the venom gland.

It is found in the secreted. Its function is as follows. Induces paralysis 5 minutes after injection into blowflies (L.caesar), and then death within 24 hours. May have antimicrobial properties, like most ant linear peptides. This is U20-myrmicitoxin-Mri1a from Manica rubida (European giant red ant).